The following is a 218-amino-acid chain: Putative tRNA methyltransferase MG248 (218 aa).

The protein belongs to the TrmK family.

It is found in the cytoplasm. The sequence is that of Putative tRNA methyltransferase MG248 from Mycoplasma genitalium (strain ATCC 33530 / DSM 19775 / NCTC 10195 / G37) (Mycoplasmoides genitalium).